The primary structure comprises 342 residues: uncharacterized protein (342 aa).

It belongs to the bacterial luciferase oxidoreductase family.

This is an uncharacterized protein from Sinorhizobium fredii (strain NBRC 101917 / NGR234).